The sequence spans 251 residues: Small ribosomal subunit protein uS2 (251 aa).

The protein belongs to the universal ribosomal protein uS2 family.

The chain is Small ribosomal subunit protein uS2 from Aromatoleum aromaticum (strain DSM 19018 / LMG 30748 / EbN1) (Azoarcus sp. (strain EbN1)).